Reading from the N-terminus, the 118-residue chain is V-type proton ATPase subunit G 2 (118 aa).

The interval Ala-23–Asn-91 is disordered. The span at Gln-35–Phe-55 shows a compositional bias: basic and acidic residues. Composition is skewed to polar residues over residues Gln-56 to Leu-69 and Arg-78 to Gln-89.

The protein belongs to the V-ATPase G subunit family. In terms of assembly, V-ATPase is a heteromultimeric enzyme made up of two complexes: the ATP-hydrolytic V1 complex and the proton translocation V0 complex. The V1 complex consists of three catalytic AB heterodimers that form a heterohexamer, three peripheral stalks each consisting of EG heterodimers, one central rotor including subunits D and F, and the regulatory subunits C and H. The proton translocation complex V0 consists of the proton transport subunit a, a ring of proteolipid subunits c9c'', rotary subunit d, subunits e and f, and the accessory subunits ATP6AP1/Ac45 and ATP6AP2/PRR.

The protein resides in the melanosome. Its subcellular location is the cytoplasmic vesicle. It localises to the clathrin-coated vesicle membrane. Its function is as follows. Subunit of the V1 complex of vacuolar(H+)-ATPase (V-ATPase), a multisubunit enzyme composed of a peripheral complex (V1) that hydrolyzes ATP and a membrane integral complex (V0) that translocates protons. V-ATPase is responsible for acidifying and maintaining the pH of intracellular compartments and in some cell types, is targeted to the plasma membrane, where it is responsible for acidifying the extracellular environment. This Mus musculus (Mouse) protein is V-type proton ATPase subunit G 2 (Atp6v1g2).